The chain runs to 288 residues: ATP synthase gamma chain (288 aa).

This sequence belongs to the ATPase gamma chain family. As to quaternary structure, F-type ATPases have 2 components, CF(1) - the catalytic core - and CF(0) - the membrane proton channel. CF(1) has five subunits: alpha(3), beta(3), gamma(1), delta(1), epsilon(1). CF(0) has three main subunits: a, b and c.

The protein localises to the cell membrane. Produces ATP from ADP in the presence of a proton gradient across the membrane. The gamma chain is believed to be important in regulating ATPase activity and the flow of protons through the CF(0) complex. This Symbiobacterium thermophilum (strain DSM 24528 / JCM 14929 / IAM 14863 / T) protein is ATP synthase gamma chain.